The following is a 450-amino-acid chain: Putative serine/threonine-protein kinase R517/R518 (450 aa).

Residues 9 to 290 form the Protein kinase domain; it reads KMTDTVLGKG…WSELFHHYWF (282 aa). Residues 15–23 and lysine 38 contribute to the ATP site; that span reads LGKGGFSEV. Aspartate 140 functions as the Proton acceptor in the catalytic mechanism.

This sequence belongs to the protein kinase superfamily. Ser/Thr protein kinase family.

The enzyme catalyses L-seryl-[protein] + ATP = O-phospho-L-seryl-[protein] + ADP + H(+). The catalysed reaction is L-threonyl-[protein] + ATP = O-phospho-L-threonyl-[protein] + ADP + H(+). The protein is Putative serine/threonine-protein kinase R517/R518 of Acanthamoeba polyphaga mimivirus (APMV).